The primary structure comprises 220 residues: Nucleolar protein 3 (220 aa).

Residue G2 is the site of N-myristoyl glycine attachment. A CARD domain is found at 4–95 (VQERPSETID…MPDPAWDWQH (92 aa)). The tract at residues 20 to 70 (VETLQADSGLLLDALVARGVLTGPEYEALDALPDAERRVRRLLLLVQSKGE) is essential for interaction with BAX. The tract at residues 111–220 (GHWTPEAPSS…FQEEDESEDS (110 aa)) is disordered. T149 bears the Phosphothreonine; by CK2 mark. Over residues 152–220 (EPELEAEATE…FQEEDESEDS (69 aa)) the composition is skewed to acidic residues.

Oligomerizes (via CARD doamin). Interacts (via CARD domain) with CASP2; inhibits CASP2 activity in a phosphorylation-dependent manner. Interacts with CASP8; decreases CASP8 activity in a mitochondria localization- and phosphorylation-dependent manner and this interaction is dissociated by calcium. Interacts with TFPT; translocates NOL3 into the nucleus and negatively regulated TFPT-induced cell death. Interacts directly (via CARD domain) with FAS and FADD (via DED domain); inhibits death-inducing signaling complex (DISC) assembly by inhibiting the increase in FAS-FADD binding induced by FAS activation. Interacts (via CARD domain) with BAX (via a C-terminal 33 residues); inhibits BAX activation and translocation and consequently cytochrome c release from mitochondria. Interacts with PPM1G; may dephosphorylate NOL3. Interacts (via CARD domain) with BBC3 (via BH3 domain); preventing the association of BBC3 with BCL2 and resulting in activation of CASP8. Interacts (via CARD domain) with BAD(via BH3 domain); preventing the association of BAD with BCL2. Interacts directly (via CARD domain) with TNFRSF1A; inhibits TNF-signaling pathway. Post-translationally, phosphorylation at Thr-149 is required for its antiapoptotic effect by blocking death-inducing signaling complex death-inducing signaling complex (DISC) activity through the control of interaction with CASP8. Phosphorylation at Thr-149 results in translocation to mitochondria and this translocation enables the binding to CASP8. Dephosphorylated at Thr-149 by calcineurin; doesn't inhibit the association between FADD and CASP8 and the consequent apoptosis. Polyubiquitinated by MDM2; promoting proteasomal-dependent degradation in response to apoptotic stimuli.

It localises to the cytoplasm. Its subcellular location is the mitochondrion. The protein localises to the sarcoplasmic reticulum. The protein resides in the membrane. Apoptosis repressor that blocks multiple modes of cell death. Inhibits extrinsic apoptotic pathways through two different ways. Firstly by interacting with FAS and FADD upon FAS activation blocking death-inducing signaling complex (DISC) assembly. Secondly by interacting with CASP8 in a mitochondria localization- and phosphorylation-dependent manner, limiting the amount of soluble CASP8 available for DISC-mediated activation. Inhibits intrinsic apoptotic pathway in response to a wide range of stresses, through its interaction with BAX resulting in BAX inactivation, preventing mitochondrial dysfunction and release of pro-apoptotic factors. Inhibits calcium-mediated cell death by functioning as a cytosolic calcium buffer, dissociating its interaction with CASP8 and maintaining calcium homeostasis. Negatively regulates oxidative stress-induced apoptosis by phosphorylation-dependent suppression of the mitochondria-mediated intrinsic pathway, by blocking CASP2 activation and BAX translocation. Negatively regulates hypoxia-induced apoptosis in part by inhibiting the release of cytochrome c from mitochondria in a caspase-independent manner. Also inhibits TNF-induced necrosis by preventing TNF-signaling pathway through TNFRSF1A interaction abrogating the recruitment of RIPK1 to complex I. Finally through its role as apoptosis repressor, promotes vascular remodeling through inhibition of apoptosis and stimulation of proliferation, in response to hypoxia. Inhibits too myoblast differentiation through caspase inhibition. The chain is Nucleolar protein 3 (Nol3) from Mus musculus (Mouse).